The chain runs to 43 residues: Venom protein E2 (43 aa).

Cystine bridges form between C3-C20 and C14-C39.

In terms of tissue distribution, expressed by the venom gland.

The protein resides in the secreted. Functionally, neurotoxin. Blocks muscular nicotinic acetylcholine receptors (nAChR). The sequence is that of Venom protein E2 from Micrurus pyrrhocryptus (Coral snake).